Consider the following 342-residue polypeptide: Nucleoid-associated protein Sfri_2491 (342 aa).

Belongs to the YejK family.

The protein resides in the cytoplasm. It is found in the nucleoid. This chain is Nucleoid-associated protein Sfri_2491, found in Shewanella frigidimarina (strain NCIMB 400).